The following is a 145-amino-acid chain: uncharacterized protein (145 aa).

An N-terminal signal peptide occupies residues 1 to 20 (MPSKVCTLILLFSVINQMKC).

This is an uncharacterized protein from Caenorhabditis elegans.